A 486-amino-acid polypeptide reads, in one-letter code: uncharacterized protein (486 aa).

Residues 18-38 (TLLQLFVFTVICVFVLSGLAI) traverse the membrane as a helical segment. Basic and acidic residues predominate over residues 62-79 (DRQKQMEKQQDSGEKRSF). 2 disordered regions span residues 62–82 (DRQK…FEST) and 117–147 (IESS…GPQM). Over residues 119-132 (SSSSSDSSSSSSSS) the composition is skewed to low complexity. Transmembrane regions (helical) follow at residues 324–344 (VVYL…MMSI), 365–385 (IGQF…LASV), and 451–471 (MLIL…LPSI).

This sequence belongs to the ABC-4 integral membrane protein family.

The protein localises to the cell membrane. This is an uncharacterized protein from Bacillus subtilis (strain 168).